Consider the following 140-residue polypeptide: Nucleoside diphosphate kinase (140 aa).

ATP is bound by residues Lys-11, Phe-59, Arg-87, Thr-93, Arg-104, and Asn-114. The active-site Pros-phosphohistidine intermediate is the His-117.

The protein belongs to the NDK family. Homotetramer. Requires Mg(2+) as cofactor.

Its subcellular location is the cytoplasm. The catalysed reaction is a 2'-deoxyribonucleoside 5'-diphosphate + ATP = a 2'-deoxyribonucleoside 5'-triphosphate + ADP. It catalyses the reaction a ribonucleoside 5'-diphosphate + ATP = a ribonucleoside 5'-triphosphate + ADP. Its function is as follows. Major role in the synthesis of nucleoside triphosphates other than ATP. The ATP gamma phosphate is transferred to the NDP beta phosphate via a ping-pong mechanism, using a phosphorylated active-site intermediate. The chain is Nucleoside diphosphate kinase from Erythrobacter litoralis (strain HTCC2594).